The sequence spans 260 residues: PsbP domain-containing protein 4, chloroplastic (260 aa).

It belongs to the PsbP family.

The protein resides in the plastid. The protein localises to the chloroplast thylakoid lumen. This chain is PsbP domain-containing protein 4, chloroplastic (PPD4), found in Arabidopsis thaliana (Mouse-ear cress).